The following is a 510-amino-acid chain: Maturase K (510 aa).

It belongs to the intron maturase 2 family. MatK subfamily.

It is found in the plastid. The protein resides in the chloroplast. Functionally, usually encoded in the trnK tRNA gene intron. Probably assists in splicing its own and other chloroplast group II introns. This chain is Maturase K, found in Thuja plicata (Western red-cedar).